A 337-amino-acid polypeptide reads, in one-letter code: G-protein coupled receptor 26 (337 aa).

Residues 1-10 (MNSWDAGLAG) lie on the Extracellular side of the membrane. Residues 11–31 (LLVGTIGVSLLSNGLVLLCLL) form a helical membrane-spanning segment. Topologically, residues 32-47 (HSADIRRQAPALFTLN) are cytoplasmic. Residues 48–68 (LTCGNLLCTVVNMPLTLAGVV) traverse the membrane as a helical segment. Residues 69–81 (AQRQPAGDRLCRL) lie on the Extracellular side of the membrane. A disulfide bridge connects residues C79 and C156. Residues 82-102 (AAFLDTFLAANSMLSMAALSI) traverse the membrane as a helical segment. Residues 103–123 (DRWVAVVFPLSYRAKMRLRDA) are Cytoplasmic-facing. A helical membrane pass occupies residues 124 to 144 (AFMVAYTWLHALTFPATALAL). At 145–168 (SWLGFHQLYASCTLCSRRPDERLR) the chain is on the extracellular side. The helical transmembrane segment at 169-189 (FAVFTSAFHALSFLLSFIVLC) threads the bilayer. Over 190-245 (FTYLKVLKVARFHCKRIDVITMQTLVLLVDIHPSVRERCLEEQKRRRQRATKKIST) the chain is Cytoplasmic. A helical transmembrane segment spans residues 246–266 (FIGTFLVCFAPYVITRLVELF). Residues 267–276 (STAPIDSHWG) lie on the Extracellular side of the membrane. Residues 277 to 297 (VLSKCLAYSKAASDPFVYSLL) traverse the membrane as a helical segment. The Cytoplasmic segment spans residues 298–337 (RHQYRRSCKELLNRIFNRRSIHSVGLTGDSHSQNILPVSE).

This sequence belongs to the G-protein coupled receptor 1 family. As to expression, detected in extracts of several brain regions including striatum, pons, cerebellum and cortex. Not detected in numerous peripheral tissue extracts, except in testis. In the brain, detected in cortical structures including the anterior cingulate area, posterior cingulate and the frontoparietal, somatosensory and piriform cortices. Prominent also in the olfactory tubercle, the islands of Calleja, ventromedial and posterior nuclei of the hypothalamus, the medial septal nucleus, nucleus of the diagonal band and the ventral tegmental area. Localized also to hippocampal structures, with signals strongest over the CA2 and CA3 regions of Ammon's horn and less so over the dentate gyrus. Expressed in the caudate putamen only in its most caudal portion, with a decreasing gradient of signal from the dorsal to ventral aspect. Strong expression associated with a single pontine structure, the inferior olivary nucleus.

It localises to the cell membrane. In terms of biological role, orphan receptor. Displays a significant level of constitutive activity. Its effect is mediated by G(s)-alpha protein that stimulate adenylate cyclase, resulting in an elevation of intracellular cAMP. The protein is G-protein coupled receptor 26 (Gpr26) of Rattus norvegicus (Rat).